The sequence spans 497 residues: Squalene monooxygenase (497 aa).

FAD contacts are provided by residues valine 29–valine 30, glutamate 49–arginine 50, arginine 57, arginine 159, valine 175, aspartate 336, and methionine 349. Transmembrane regions (helical) follow at residues phenylalanine 434–leucine 454 and leucine 467–phenylalanine 487.

It belongs to the squalene monooxygenase family. The cofactor is FAD.

It is found in the microsome membrane. The protein resides in the endoplasmic reticulum membrane. It carries out the reaction squalene + reduced [NADPH--hemoprotein reductase] + O2 = (S)-2,3-epoxysqualene + oxidized [NADPH--hemoprotein reductase] + H2O + H(+). Its pathway is terpene metabolism; lanosterol biosynthesis; lanosterol from farnesyl diphosphate: step 2/3. Catalyzes the stereospecific oxidation of squalene to (S)-2,3-epoxysqualene, and is considered to be a rate-limiting enzyme in steroid biosynthesis. This is Squalene monooxygenase (ERG1) from Eremothecium gossypii (strain ATCC 10895 / CBS 109.51 / FGSC 9923 / NRRL Y-1056) (Yeast).